Reading from the N-terminus, the 429-residue chain is MTAPLKAIDGSADLPALMNDLASRARAAARVLALAPAAQKNRALEAMERLIRARVDTIIAANAEDVVEAKAAGITSSFLDRLTLTPARVAAMADGIAAVREVADPIGIVTESWQRPNGMTIERVRVPLGVIGVIFESRPNVAADAGVLCLKSGNAVILRGGSDSFRSCRAIHECLVEGLREAGLPDAAITLVPTRDRAAVGLLLSGLNGGVDVIVPRGGKNLVARVEAEARVPVFAHLEGVNHVYVDGAADLEMAKSIVLNAKMRRTGVCGAAETLLIDRASQDKIKPLVDTLINAGCEVRGDDAVRAADARVKPASNEDWDTEYLDAVIAAKVVDGVEGAIAHIQAHGSHHTDAIVTADVAAADKFLNEVDSAIVLHNASTQFADGGEFGFGAEIGIATGKFHARGPVGVEQLTSFKYRIHGTGQTRP.

It belongs to the gamma-glutamyl phosphate reductase family.

It is found in the cytoplasm. It catalyses the reaction L-glutamate 5-semialdehyde + phosphate + NADP(+) = L-glutamyl 5-phosphate + NADPH + H(+). Its pathway is amino-acid biosynthesis; L-proline biosynthesis; L-glutamate 5-semialdehyde from L-glutamate: step 2/2. Catalyzes the NADPH-dependent reduction of L-glutamate 5-phosphate into L-glutamate 5-semialdehyde and phosphate. The product spontaneously undergoes cyclization to form 1-pyrroline-5-carboxylate. This is Gamma-glutamyl phosphate reductase from Bradyrhizobium sp. (strain BTAi1 / ATCC BAA-1182).